The primary structure comprises 120 residues: Myohemerythrin (120 aa).

Positions 26, 56, 60, 75, 79, 108, and 113 each coordinate Fe cation.

Belongs to the hemerythrin family.

Its function is as follows. Myohemerythrin is an oxygen-binding protein found in the retractor muscles of certain worms. The oxygen-binding site contains two iron atoms. The chain is Myohemerythrin from Riftia pachyptila (Vent tube worm).